The following is a 142-amino-acid chain: UPF0102 protein Bamb_0202 (142 aa).

The interval 1–23 (MCHAAPAAPASGRGLPHGGGNFS) is disordered.

This sequence belongs to the UPF0102 family.

In Burkholderia ambifaria (strain ATCC BAA-244 / DSM 16087 / CCUG 44356 / LMG 19182 / AMMD) (Burkholderia cepacia (strain AMMD)), this protein is UPF0102 protein Bamb_0202.